The chain runs to 115 residues: Large ribosomal subunit protein bL19 (115 aa).

Belongs to the bacterial ribosomal protein bL19 family.

Functionally, this protein is located at the 30S-50S ribosomal subunit interface and may play a role in the structure and function of the aminoacyl-tRNA binding site. This is Large ribosomal subunit protein bL19 from Lactobacillus delbrueckii subsp. bulgaricus (strain ATCC BAA-365 / Lb-18).